An 89-amino-acid polypeptide reads, in one-letter code: Small ribosomal subunit protein uS15 (89 aa).

The segment at 1-22 is disordered; the sequence is MALEKEEKSQIINNYQLHETDT. Positions 10–22 are enriched in polar residues; the sequence is QIINNYQLHETDT.

This sequence belongs to the universal ribosomal protein uS15 family. As to quaternary structure, part of the 30S ribosomal subunit. Forms a bridge to the 50S subunit in the 70S ribosome, contacting the 23S rRNA.

Functionally, one of the primary rRNA binding proteins, it binds directly to 16S rRNA where it helps nucleate assembly of the platform of the 30S subunit by binding and bridging several RNA helices of the 16S rRNA. In terms of biological role, forms an intersubunit bridge (bridge B4) with the 23S rRNA of the 50S subunit in the ribosome. The polypeptide is Small ribosomal subunit protein uS15 (Chloroflexus aggregans (strain MD-66 / DSM 9485)).